Reading from the N-terminus, the 93-residue chain is Bombyxin-related peptide B (93 aa).

An N-terminal signal peptide occupies residues M1 to G21. Cystine bridges form between C25-C80, C37-C93, and C79-C84. A propeptide spans S47–G71 (c peptide like).

Belongs to the insulin family. Heterodimer of a B chain and an A chain linked by two disulfide bonds. In terms of tissue distribution, located in 4 pairs of medial neurosecretory cells in the brain.

It localises to the secreted. The polypeptide is Bombyxin-related peptide B (Agrius convolvuli (Convolvulus hawk-moth)).